We begin with the raw amino-acid sequence, 158 residues long: Endoribonuclease YbeY (158 aa).

The Zn(2+) site is built by H124, H128, and H134.

The protein belongs to the endoribonuclease YbeY family. It depends on Zn(2+) as a cofactor.

It localises to the cytoplasm. Functionally, single strand-specific metallo-endoribonuclease involved in late-stage 70S ribosome quality control and in maturation of the 3' terminus of the 16S rRNA. The sequence is that of Endoribonuclease YbeY from Caldicellulosiruptor saccharolyticus (strain ATCC 43494 / DSM 8903 / Tp8T 6331).